The following is a 1415-amino-acid chain: DNA-directed RNA polymerase subunit beta' (1415 aa).

Zn(2+) is bound by residues Cys214, Cys294, Cys301, and Cys304. A compositionally biased stretch (polar residues) spans 1335–1351; that stretch reads QNFVDSQGKPQSQSSFI. The segment at 1335–1390 is disordered; sequence QNFVDSQGKPQSQSSFIDDSMSEFSPVKDKSGSVLDDSDFPPGNFDSDFPADNYDL.

The protein belongs to the RNA polymerase beta' chain family. RpoC2 subfamily. As to quaternary structure, in cyanobacteria the RNAP catalytic core is composed of 2 alpha, 1 beta, 1 beta', 1 gamma and 1 omega subunit. When a sigma factor is associated with the core the holoenzyme is formed, which can initiate transcription. Requires Zn(2+) as cofactor.

The enzyme catalyses RNA(n) + a ribonucleoside 5'-triphosphate = RNA(n+1) + diphosphate. DNA-dependent RNA polymerase catalyzes the transcription of DNA into RNA using the four ribonucleoside triphosphates as substrates. In Trichodesmium erythraeum (strain IMS101), this protein is DNA-directed RNA polymerase subunit beta'.